Here is an 88-residue protein sequence, read N- to C-terminus: NADH-ubiquinone oxidoreductase chain 4L (88 aa).

Helical transmembrane passes span 1 to 21 (MNLSLLLFLIGILGFILNRKN), 22 to 42 (IILMIIAIEIMLLAITLLVLM), and 55 to 75 (FSIYIISIAGAESVIGLSILV).

Belongs to the complex I subunit 4L family.

It is found in the mitochondrion membrane. It carries out the reaction a ubiquinone + NADH + 5 H(+)(in) = a ubiquinol + NAD(+) + 4 H(+)(out). Core subunit of the mitochondrial membrane respiratory chain NADH dehydrogenase (Complex I) that is believed to belong to the minimal assembly required for catalysis. Complex I functions in the transfer of electrons from NADH to the respiratory chain. The immediate electron acceptor for the enzyme is believed to be ubiquinone. This chain is NADH-ubiquinone oxidoreductase chain 4L (ND4L), found in Schizophyllum commune (Split gill fungus).